Reading from the N-terminus, the 686-residue chain is Probable ferric reductase transmembrane component (686 aa).

7 helical membrane passes run 23 to 43, 79 to 99, 111 to 131, 147 to 167, 178 to 198, 205 to 225, and 256 to 276; these read LSGW…VPVV, TLWL…VGSA, VAAA…PLPY, VVVL…ATSG, WMGA…LPAV, TFYY…HVHS, and VTVV…ADLV. Positions 108 to 666 constitute a Ferric oxidoreductase domain; the sequence is LGRVAAAFMP…LAAGPQALVE (559 aa). Residue 308-314 participates in FAD binding; it reads HPFTVAS. Residues 392 to 412 traverse the membrane as a helical segment; that stretch reads LMVVGGSAISFGLPFLRILNF. Residue 431–439 coordinates NAD(+); sequence ILSQFRSNF. Residues Asn-506 and Asn-644 are each glycosylated (N-linked (GlcNAc...) asparagine).

The cofactor is FAD.

Its subcellular location is the membrane. The enzyme catalyses 2 a Fe(II)-siderophore + NAD(+) + H(+) = 2 a Fe(III)-siderophore + NADH. In terms of biological role, is required for the uptake of Fe(3+) ions. May participate in the transport of electrons from cytoplasm to an extracellular substrate (Fe(3+) ion) via FAD and heme intermediates. Involved in iron homeostasis. This Eremothecium gossypii (strain ATCC 10895 / CBS 109.51 / FGSC 9923 / NRRL Y-1056) (Yeast) protein is Probable ferric reductase transmembrane component (FRE8).